Reading from the N-terminus, the 563-residue chain is Light-independent protochlorophyllide reductase subunit B (563 aa).

Residue aspartate 36 participates in [4Fe-4S] cluster binding. Aspartate 293 functions as the Proton donor in the catalytic mechanism. Residue 437 to 438 participates in substrate binding; the sequence is GM. The segment at 459–478 is disordered; it reads ERREAEFGNQKVETGEPGTG.

Belongs to the ChlB/BchB/BchZ family. As to quaternary structure, protochlorophyllide reductase is composed of three subunits; BchL, BchN and BchB. Forms a heterotetramer of two BchB and two BchN subunits. It depends on [4Fe-4S] cluster as a cofactor.

The catalysed reaction is chlorophyllide a + oxidized 2[4Fe-4S]-[ferredoxin] + 2 ADP + 2 phosphate = protochlorophyllide a + reduced 2[4Fe-4S]-[ferredoxin] + 2 ATP + 2 H2O. It participates in porphyrin-containing compound metabolism; bacteriochlorophyll biosynthesis (light-independent). Its function is as follows. Component of the dark-operative protochlorophyllide reductase (DPOR) that uses Mg-ATP and reduced ferredoxin to reduce ring D of protochlorophyllide (Pchlide) to form chlorophyllide a (Chlide). This reaction is light-independent. The NB-protein (BchN-BchB) is the catalytic component of the complex. This is Light-independent protochlorophyllide reductase subunit B from Roseiflexus castenholzii (strain DSM 13941 / HLO8).